The chain runs to 337 residues: Aspartate-semialdehyde dehydrogenase 2 (337 aa).

Residues 13-16 (TGAV) and 41-42 (RS) contribute to the NADP(+) site. Arginine 101 serves as a coordination point for phosphate. Cysteine 132 functions as the Acyl-thioester intermediate in the catalytic mechanism. Residue glutamine 159 coordinates substrate. 162–163 (SG) serves as a coordination point for NADP(+). Position 216 (lysine 216) interacts with phosphate. Arginine 238 provides a ligand contact to substrate. Residue histidine 245 is the Proton acceptor of the active site. Asparagine 316 contributes to the NADP(+) binding site.

Belongs to the aspartate-semialdehyde dehydrogenase family. In terms of assembly, homodimer.

It carries out the reaction L-aspartate 4-semialdehyde + phosphate + NADP(+) = 4-phospho-L-aspartate + NADPH + H(+). The protein operates within amino-acid biosynthesis; L-lysine biosynthesis via DAP pathway; (S)-tetrahydrodipicolinate from L-aspartate: step 2/4. It participates in amino-acid biosynthesis; L-methionine biosynthesis via de novo pathway; L-homoserine from L-aspartate: step 2/3. It functions in the pathway amino-acid biosynthesis; L-threonine biosynthesis; L-threonine from L-aspartate: step 2/5. Its function is as follows. Catalyzes the NADPH-dependent formation of L-aspartate-semialdehyde (L-ASA) by the reductive dephosphorylation of L-aspartyl-4-phosphate. The protein is Aspartate-semialdehyde dehydrogenase 2 (asd2) of Vibrio cholerae serotype O1 (strain ATCC 39315 / El Tor Inaba N16961).